We begin with the raw amino-acid sequence, 58 residues long: Small ribosomal subunit protein bS21B (58 aa).

Belongs to the bacterial ribosomal protein bS21 family.

The chain is Small ribosomal subunit protein bS21B (rpsU2) from Nostoc sp. (strain PCC 7120 / SAG 25.82 / UTEX 2576).